The chain runs to 261 residues: Chanoclavine-I dehydrogenase ifgE (261 aa).

An N-terminal signal peptide occupies residues 1–20 (MASVKSRVFAITGGASGIGA). NADP(+) is bound by residues Ile-18, Lys-48, Asp-66, Arg-132, Tyr-166, Lys-170, and Thr-201. Tyr-166 serves as the catalytic Proton acceptor. The active-site Lowers pKa of active site Tyr is the Lys-170.

This sequence belongs to the short-chain dehydrogenases/reductases (SDR) family.

It functions in the pathway alkaloid biosynthesis; ergot alkaloid biosynthesis. Its function is as follows. Chanoclavine-I dehydrogenase; part of the gene cluster that mediates the biosynthesis of isofumigaclavines, fungal ergot alkaloids. The tryptophan dimethylallyltransferase ifgA catalyzes the first step of ergot alkaloid biosynthesis by condensing dimethylallyl diphosphate (DMAP) and tryptophan to form 4-dimethylallyl-L-tryptophan. The second step is catalyzed by the methyltransferase ifgB that methylates 4-dimethylallyl-L-tryptophan in the presence of S-adenosyl-L-methionine, resulting in the formation of N-methyl-dimethylallyl-L-tryptophan. The catalase ifgD and the FAD-dependent oxidoreductase ifgC then transform N-methyl-dimethylallyl-L-tryptophan to chanoclavine-I which is further oxidized by ifgE in the presence of NAD(+), resulting in the formation of chanoclavine-I aldehyde. The chanoclavine-I aldehyde reductases ifgG and/or fgaOx3 reduce chanoclavine-I aldehyde to dihydrochanoclavine-I aldehyde that spontaneously dehydrates to form 6,8-dimethyl-6,7-didehydroergoline. The festuclavine dehydrogenases ifgF1 and/or ifgF2 then catalyze the reduction of 6,8-dimethyl-6,7-didehydroergoline to form festuclavine. Hydrolysis of festuclavine by a yet undetermined cytochrome P450 monooxygenase (called ifgH) then leads to the formation of isofumigaclavine B which is in turn acetylated by ifgI to isofumigaclavine A. Penicillium roqueforti has interestingly at least two sets of genes for the consumption of chanoclavine-I aldehyde on three different loci, the OYEs ifgG/fgaOx3 and the festuclavine synthase homologs ifgF1/ifgF2. The reason for the duplication of these genes is unclear, probably to ensure the conversion of chanoclavine-I aldehyde by differential gene expression under various environmental conditions. This Penicillium roqueforti (strain FM164) protein is Chanoclavine-I dehydrogenase ifgE.